A 225-amino-acid polypeptide reads, in one-letter code: MEQYKKEFIEFMVDCGVLKFGDFTTKSGRKTPFFVNTGFYRTGAQLRKLGEYYAKAIHDAYGLDFDVLFGPAYKGIPLSVATAMSISEHFDKDIKYCSNRKEVKDHGDTGILLGSPISDGDKVVIIEDVTTAGTSIGETMPILSAQGNVDVVGLVVSVDRMERGQGKKSALKEIEENYGIETTAIVTMKEVVEHLYGKPYNGKVVIDDQLKQAIDAYYEQYGVEA.

Residues Lys26, 73–74, Arg100, Lys101, Lys104, His106, and 127–135 contribute to the 5-phospho-alpha-D-ribose 1-diphosphate site; these read YK and EDVTTAGTS. Orotate contacts are provided by Thr131 and Arg160.

The protein belongs to the purine/pyrimidine phosphoribosyltransferase family. PyrE subfamily. As to quaternary structure, homodimer. The cofactor is Mg(2+).

The enzyme catalyses orotidine 5'-phosphate + diphosphate = orotate + 5-phospho-alpha-D-ribose 1-diphosphate. Its pathway is pyrimidine metabolism; UMP biosynthesis via de novo pathway; UMP from orotate: step 1/2. In terms of biological role, catalyzes the transfer of a ribosyl phosphate group from 5-phosphoribose 1-diphosphate to orotate, leading to the formation of orotidine monophosphate (OMP). This is Orotate phosphoribosyltransferase from Lachnoclostridium phytofermentans (strain ATCC 700394 / DSM 18823 / ISDg) (Clostridium phytofermentans).